We begin with the raw amino-acid sequence, 352 residues long: Heat-inducible transcription repressor HrcA (352 aa).

The protein belongs to the HrcA family.

Negative regulator of class I heat shock genes (grpE-dnaK-dnaJ and groELS operons). Prevents heat-shock induction of these operons. This is Heat-inducible transcription repressor HrcA from Ralstonia nicotianae (strain ATCC BAA-1114 / GMI1000) (Ralstonia solanacearum).